A 345-amino-acid polypeptide reads, in one-letter code: L-threonine 3-dehydrogenase (345 aa).

Residue Cys42 participates in Zn(2+) binding. Active-site charge relay system residues include Thr44 and His47. His67, Glu68, Cys97, Cys100, Cys103, and Cys111 together coordinate Zn(2+). NAD(+) contacts are provided by residues Ile179, Asp199, Arg204, 266–268 (LGI), and 290–291 (IY).

It belongs to the zinc-containing alcohol dehydrogenase family. Homotetramer. The cofactor is Zn(2+).

Its subcellular location is the cytoplasm. It carries out the reaction L-threonine + NAD(+) = (2S)-2-amino-3-oxobutanoate + NADH + H(+). It participates in amino-acid degradation; L-threonine degradation via oxydo-reductase pathway; glycine from L-threonine: step 1/2. Its function is as follows. Catalyzes the NAD(+)-dependent oxidation of L-threonine to 2-amino-3-ketobutyrate. This chain is L-threonine 3-dehydrogenase, found in Rhizobium etli (strain ATCC 51251 / DSM 11541 / JCM 21823 / NBRC 15573 / CFN 42).